The primary structure comprises 179 residues: Large ribosomal subunit protein uL5 (179 aa).

Belongs to the universal ribosomal protein uL5 family. In terms of assembly, part of the 50S ribosomal subunit; part of the 5S rRNA/L5/L18/L25 subcomplex. Contacts the 5S rRNA and the P site tRNA. Forms a bridge to the 30S subunit in the 70S ribosome.

In terms of biological role, this is one of the proteins that bind and probably mediate the attachment of the 5S RNA into the large ribosomal subunit, where it forms part of the central protuberance. In the 70S ribosome it contacts protein S13 of the 30S subunit (bridge B1b), connecting the 2 subunits; this bridge is implicated in subunit movement. Contacts the P site tRNA; the 5S rRNA and some of its associated proteins might help stabilize positioning of ribosome-bound tRNAs. This Clostridium perfringens (strain ATCC 13124 / DSM 756 / JCM 1290 / NCIMB 6125 / NCTC 8237 / Type A) protein is Large ribosomal subunit protein uL5.